Here is a 55-residue protein sequence, read N- to C-terminus: Light-harvesting polypeptide B-800/860 beta chain (55 aa).

The Cytoplasmic segment spans residues 1-21 (ADANKVWPTGLTVAEAEELHT). Residues 22–44 (YVTNGFRVFVGIAVVAHVLVFAA) traverse the membrane as a helical segment. Position 38 (histidine 38) interacts with a bacteriochlorophyll. Over 45 to 55 (HPWGRGGALVA) the chain is Periplasmic.

The protein belongs to the antenna complex beta subunit family. In terms of assembly, the core complex is formed by different alpha and beta chains, binding bacteriochlorophyll molecules, and arranged most probably in tetrameric structures disposed around the reaction center. The non-pigmented gamma chains may constitute additional components.

Its subcellular location is the cell inner membrane. Its function is as follows. Antenna complexes are light-harvesting systems, which transfer the excitation energy to the reaction centers. This chain is Light-harvesting polypeptide B-800/860 beta chain, found in Rhodocyclus tenuis (Rhodospirillum tenue).